Here is a 612-residue protein sequence, read N- to C-terminus: Sulfite reductase [NADPH] flavoprotein alpha-component (612 aa).

The Flavodoxin-like domain occupies V64–V202. Residues S70–A75, S117–G120, and L153–C162 each bind FMN. The FAD-binding FR-type domain occupies T247–P461. Residues T335, K369, R399 to S402, T417 to G419, Y423, and G432 to S435 each bind FAD. Residues S532–R533, K538–Q542, and D574 contribute to the NADP(+) site. Y612 contacts FAD.

The protein belongs to the NADPH-dependent sulphite reductase flavoprotein subunit CysJ family. In the N-terminal section; belongs to the flavodoxin family. It in the C-terminal section; belongs to the flavoprotein pyridine nucleotide cytochrome reductase family. In terms of assembly, alpha(8)-beta(8). The alpha component is a flavoprotein, the beta component is a hemoprotein. FAD serves as cofactor. It depends on FMN as a cofactor.

The enzyme catalyses hydrogen sulfide + 3 NADP(+) + 3 H2O = sulfite + 3 NADPH + 4 H(+). It functions in the pathway sulfur metabolism; hydrogen sulfide biosynthesis; hydrogen sulfide from sulfite (NADPH route): step 1/1. In terms of biological role, component of the sulfite reductase complex that catalyzes the 6-electron reduction of sulfite to sulfide. This is one of several activities required for the biosynthesis of L-cysteine from sulfate. The flavoprotein component catalyzes the electron flow from NADPH -&gt; FAD -&gt; FMN to the hemoprotein component. The sequence is that of Sulfite reductase [NADPH] flavoprotein alpha-component from Yersinia pseudotuberculosis serotype O:1b (strain IP 31758).